We begin with the raw amino-acid sequence, 131 residues long: MINDLVSDALTRIRNAGMRRLDVTTLVHSKSVEALANILVEKGYIESCNVVEDGVKKTINVVLKYSDNGKSVINEMKRISKPGRRVYKGKDEIKRFKNGYGTIIVSTSHGVLPNDKAYALGVGGEVMCTVW.

Belongs to the universal ribosomal protein uS8 family. Part of the 30S ribosomal subunit. Contacts proteins S5 and S12.

Its function is as follows. One of the primary rRNA binding proteins, it binds directly to 16S rRNA central domain where it helps coordinate assembly of the platform of the 30S subunit. This Sulfurimonas denitrificans (strain ATCC 33889 / DSM 1251) (Thiomicrospira denitrificans (strain ATCC 33889 / DSM 1251)) protein is Small ribosomal subunit protein uS8.